The chain runs to 330 residues: NADH-quinone oxidoreductase subunit H (330 aa).

A run of 8 helical transmembrane segments spans residues 11 to 31 (ILVA…CGAL), 81 to 101 (FIFV…FAII), 114 to 134 (IGIL…LFAG), 154 to 174 (ISYE…VGSF), 187 to 207 (LWFI…GVAV), 238 to 258 (FFVG…TLFF), 270 to 290 (QIPF…FILL), and 309 to 329 (FCLP…LAAA).

This sequence belongs to the complex I subunit 1 family. As to quaternary structure, NDH-1 is composed of 13 different subunits. Subunits NuoA, H, J, K, L, M, N constitute the membrane sector of the complex.

Its subcellular location is the cell inner membrane. It carries out the reaction a quinone + NADH + 5 H(+)(in) = a quinol + NAD(+) + 4 H(+)(out). Functionally, NDH-1 shuttles electrons from NADH, via FMN and iron-sulfur (Fe-S) centers, to quinones in the respiratory chain. The immediate electron acceptor for the enzyme in this species is believed to be ubiquinone. Couples the redox reaction to proton translocation (for every two electrons transferred, four hydrogen ions are translocated across the cytoplasmic membrane), and thus conserves the redox energy in a proton gradient. This subunit may bind ubiquinone. This Ectopseudomonas mendocina (strain ymp) (Pseudomonas mendocina) protein is NADH-quinone oxidoreductase subunit H.